A 189-amino-acid polypeptide reads, in one-letter code: Chitin synthase 1 (189 aa).

This sequence belongs to the chitin synthase family. Class I subfamily.

It localises to the cell membrane. The enzyme catalyses [(1-&gt;4)-N-acetyl-beta-D-glucosaminyl](n) + UDP-N-acetyl-alpha-D-glucosamine = [(1-&gt;4)-N-acetyl-beta-D-glucosaminyl](n+1) + UDP + H(+). Its function is as follows. Polymerizes chitin, a structural polymer of the cell wall and septum, by transferring the sugar moiety of UDP-GlcNAc to the non-reducing end of the growing chitin polymer. The polypeptide is Chitin synthase 1 (CHS1) (Exophiala jeanselmei (Dematiaceous fungus)).